Consider the following 326-residue polypeptide: MGTEKEEPDCQKQFQAAVSVIQNLPKNGSYRPSYEEMLRFYSYYKQATAGPCLVPRPGFWDPIGRYKWDAWNSLGKMSREEAMSAYITEMKLVAQKVIDTVPLGEVAEDMFGYFEPLYQVIPDMPRPPETFLRRVTGWQEPAVNRDVQAAPEPSHPPKEPAPPSPESRLPRDLDLEVFCDSVEQLEPELVRVPVLSPVPAESELPHLHTGTGDSAQRVWAEQKEAAGRELTTRSSPESPEGFGGSLMGPQELDRWLVGTVQAMQESMKDVHRRLQILESKPQPLEQQRSPRTRPWPLGLSTPTLLFFILWPFVVQWLFRQFRTQRR.

The ACB domain maps to 10–99 (CQKQFQAAVS…MKLVAQKVID (90 aa)). An acyl-CoA contacts are provided by residues 21 to 30 (IQNLPKNGSY), 41 to 45 (YSYYK), K67, and Y86. 2 disordered regions span residues 147 to 170 (VQAA…SRLP) and 223 to 248 (KEAA…SLMG). S164 is subject to Phosphoserine.

In terms of biological role, binds medium- and long-chain acyl-CoA esters and may function as an intracellular carrier of acyl-CoA esters. The polypeptide is Acyl-CoA-binding domain-containing protein 4 (Acbd4) (Rattus norvegicus (Rat)).